Reading from the N-terminus, the 279-residue chain is Fatty acid metabolism regulator protein (279 aa).

One can recognise an HTH gntR-type domain in the interval 6 to 74 (KSPAGFAEKY…HGKPTKVNQF (69 aa)). A DNA-binding region (H-T-H motif) is located at residues 34–53 (ERELSELIGVTRTTLREVLQ).

Homodimer.

It localises to the cytoplasm. Functionally, multifunctional regulator of fatty acid metabolism. This Vibrio parahaemolyticus serotype O3:K6 (strain RIMD 2210633) protein is Fatty acid metabolism regulator protein.